A 31-amino-acid polypeptide reads, in one-letter code: Cliotide T17 (31 aa).

Positions 1-31 (GTVPCGESCVFIPCITGIAGCSCKNKVCYLN) form a cross-link, cyclopeptide (Gly-Asn). 3 cysteine pairs are disulfide-bonded: Cys-5–Cys-21, Cys-9–Cys-23, and Cys-14–Cys-28.

Contains 3 disulfide bonds. In terms of processing, this is a cyclic peptide. As to expression, expressed in root nodules but not in seed.

Functionally, probably participates in a plant defense mechanism. This is Cliotide T17 from Clitoria ternatea (Butterfly pea).